A 536-amino-acid chain; its full sequence is Chaperonin GroEL (536 aa).

ATP contacts are provided by residues 29–32 (TLGP), 86–90 (DGTTT), Gly-412, and Asp-493.

This sequence belongs to the chaperonin (HSP60) family. As to quaternary structure, forms a cylinder of 14 subunits composed of two heptameric rings stacked back-to-back. Interacts with the co-chaperonin GroES.

Its subcellular location is the cytoplasm. The enzyme catalyses ATP + H2O + a folded polypeptide = ADP + phosphate + an unfolded polypeptide.. In terms of biological role, together with its co-chaperonin GroES, plays an essential role in assisting protein folding. The GroEL-GroES system forms a nano-cage that allows encapsulation of the non-native substrate proteins and provides a physical environment optimized to promote and accelerate protein folding. The protein is Chaperonin GroEL of Onion yellows phytoplasma (strain OY-M).